Reading from the N-terminus, the 662-residue chain is Probable quinol oxidase subunit 1 (662 aa).

2 consecutive transmembrane segments (helical) span residues 14 to 34 and 58 to 78; these read WMITMAQIGAPFLVIGLIAVI and IMYLICAVLMFVRGGIDALLI. Fe(II)-heme a is bound at residue His102. A run of 8 helical transmembrane segments spans residues 103-123, 140-160, 187-207, 228-248, 273-293, 311-331, 336-356, and 376-396; these read GVIMIIFMAMPFIFGLWNIVV, VSFWLFFAGMILFNLSFIIGG, IAIQISGLGTLATGINFFVTI, FITTLIVILAFPPLTVALALM, FFWVWGHPEVYIVILPAFGIY, MVWATAGIAFLSFLVWVHHFF, GALINSFFSISTMLIGIPTGV, and MLFSLAFIPNFLLGGVTGVML. Cu cation is bound by residues His279, Tyr283, His328, and His329. Positions 279 to 283 form a cross-link, 1'-histidyl-3'-tyrosine (His-Tyr); that stretch reads HPEVY. His414 serves as a coordination point for heme a3. A run of 5 helical transmembrane segments spans residues 415-435, 451-471, 493-513, 587-604, and 608-627; these read FHYTLVTGVVFACLAGLIFWY, CFWFFMIGFNVCFLPQFILGL, ISTIGALLMAIGFLFLVVSIV, PVGFWIGIFMTIGGFFLI, and VIPALICLFGIFGTMIYRSF. Fe(II)-heme a is bound at residue His416.

It belongs to the heme-copper respiratory oxidase family. Cu cation is required as a cofactor. It depends on ferriheme a as a cofactor. Requires Heme A3. as cofactor.

The protein resides in the cell membrane. The enzyme catalyses 2 a quinol + O2 = 2 a quinone + 2 H2O. It functions in the pathway energy metabolism; oxidative phosphorylation. In terms of biological role, catalyzes quinol oxidation with the concomitant reduction of oxygen to water. The sequence is that of Probable quinol oxidase subunit 1 (qoxB) from Staphylococcus aureus (strain MRSA252).